Reading from the N-terminus, the 289-residue chain is 4-diphosphocytidyl-2-C-methyl-D-erythritol kinase (289 aa).

K11 is an active-site residue. An ATP-binding site is contributed by 96–106 (PVAAGIGGGSS). D138 is an active-site residue.

It belongs to the GHMP kinase family. IspE subfamily.

It carries out the reaction 4-CDP-2-C-methyl-D-erythritol + ATP = 4-CDP-2-C-methyl-D-erythritol 2-phosphate + ADP + H(+). Its pathway is isoprenoid biosynthesis; isopentenyl diphosphate biosynthesis via DXP pathway; isopentenyl diphosphate from 1-deoxy-D-xylulose 5-phosphate: step 3/6. Catalyzes the phosphorylation of the position 2 hydroxy group of 4-diphosphocytidyl-2C-methyl-D-erythritol. This chain is 4-diphosphocytidyl-2-C-methyl-D-erythritol kinase, found in Azorhizobium caulinodans (strain ATCC 43989 / DSM 5975 / JCM 20966 / LMG 6465 / NBRC 14845 / NCIMB 13405 / ORS 571).